A 333-amino-acid polypeptide reads, in one-letter code: Protein-methionine-sulfoxide reductase catalytic subunit MsrP (333 aa).

A signal peptide (tat-type signal) is located at residues 1–43; sequence MHKHRKPTEADVTPESLFYQRRRILKALGISAAALSLPFSAQA. Mo-molybdopterin contacts are provided by residues Asn-87, 90–91, Cys-145, Thr-180, Asn-232, Arg-237, and 248–250; these read YE and NIK.

It belongs to the MsrP family. In terms of assembly, heterodimer of a catalytic subunit (MsrP) and a heme-binding subunit (MsrQ). Mo-molybdopterin is required as a cofactor. Predicted to be exported by the Tat system. The position of the signal peptide cleavage has not been experimentally proven.

Its subcellular location is the periplasm. The enzyme catalyses L-methionyl-[protein] + a quinone + H2O = L-methionyl-(S)-S-oxide-[protein] + a quinol. It carries out the reaction L-methionyl-[protein] + a quinone + H2O = L-methionyl-(R)-S-oxide-[protein] + a quinol. Its function is as follows. Part of the MsrPQ system that repairs oxidized periplasmic proteins containing methionine sulfoxide residues (Met-O), using respiratory chain electrons. Thus protects these proteins from oxidative-stress damage caused by reactive species of oxygen and chlorine generated by the host defense mechanisms. MsrPQ is essential for the maintenance of envelope integrity under bleach stress, rescuing a wide series of structurally unrelated periplasmic proteins from methionine oxidation. The catalytic subunit MsrP is non-stereospecific, being able to reduce both (R-) and (S-) diastereoisomers of methionine sulfoxide. This Pectobacterium carotovorum subsp. carotovorum (strain PC1) protein is Protein-methionine-sulfoxide reductase catalytic subunit MsrP.